The primary structure comprises 360 residues: Dihydroorotate dehydrogenase (quinone) (360 aa).

FMN contacts are provided by residues 66 to 70 (AGFDK) and threonine 90. Lysine 70 is a substrate binding site. A substrate-binding site is contributed by 115–119 (NRMGF). Residues asparagine 143 and asparagine 176 each coordinate FMN. Asparagine 176 contacts substrate. Serine 179 serves as the catalytic Nucleophile. Asparagine 181 is a binding site for substrate. Lysine 212 and threonine 240 together coordinate FMN. A substrate-binding site is contributed by 241-242 (NT). FMN contacts are provided by residues glycine 264, glycine 293, and 314–315 (YT).

It belongs to the dihydroorotate dehydrogenase family. Type 2 subfamily. In terms of assembly, monomer. FMN is required as a cofactor.

The protein resides in the cell membrane. It carries out the reaction (S)-dihydroorotate + a quinone = orotate + a quinol. The protein operates within pyrimidine metabolism; UMP biosynthesis via de novo pathway; orotate from (S)-dihydroorotate (quinone route): step 1/1. Functionally, catalyzes the conversion of dihydroorotate to orotate with quinone as electron acceptor. This chain is Dihydroorotate dehydrogenase (quinone), found in Mycobacterium marinum (strain ATCC BAA-535 / M).